A 492-amino-acid polypeptide reads, in one-letter code: Fibroblast growth factor receptor substrate 3 (492 aa).

Gly2 is lipidated: N-myristoyl glycine. The IRS-type PTB domain maps to Val13–Glu115. Disordered regions lie at residues Gly153–Ser173, Gln338–Tyr455, and Ser467–Leu492.

In terms of assembly, binds NTRK1. Binds FGFR1, NGFR, GRB2, PTPN11 and ERK2. In terms of processing, phosphorylated by ULK2 in vitro. Phosphorylated on tyrosine residues upon stimulation by BFGF or NGFB.

It is found in the membrane. Its function is as follows. Adapter protein that links FGF and NGF receptors to downstream signaling pathways. Involved in the activation of MAP kinases. Down-regulates ERK2 signaling by interfering with the phosphorylation and nuclear translocation of ERK2. This is Fibroblast growth factor receptor substrate 3 (FRS3) from Homo sapiens (Human).